A 438-amino-acid chain; its full sequence is GTPase Obg (438 aa).

In terms of domain architecture, Obg spans methionine 1–isoleucine 159. The OBG-type G domain occupies alanine 160 to proline 332. Residues glycine 166 to serine 173, phenylalanine 191 to serine 195, aspartate 219 to glycine 222, asparagine 285 to glutamate 288, and serine 313 to lysine 315 each bind ATP. Mg(2+)-binding residues include serine 173 and threonine 193. The 79-residue stretch at isoleucine 357 to aspartate 435 folds into the OCT domain.

Belongs to the TRAFAC class OBG-HflX-like GTPase superfamily. OBG GTPase family. As to quaternary structure, monomer. Requires Mg(2+) as cofactor.

It localises to the cytoplasm. Functionally, an essential GTPase which binds GTP, GDP and possibly (p)ppGpp with moderate affinity, with high nucleotide exchange rates and a fairly low GTP hydrolysis rate. Plays a role in control of the cell cycle, stress response, ribosome biogenesis and in those bacteria that undergo differentiation, in morphogenesis control. In Deinococcus radiodurans (strain ATCC 13939 / DSM 20539 / JCM 16871 / CCUG 27074 / LMG 4051 / NBRC 15346 / NCIMB 9279 / VKM B-1422 / R1), this protein is GTPase Obg.